Consider the following 419-residue polypeptide: Dual specificity mitogen-activated protein kinase kinase 7 (419 aa).

A2 is subject to N-acetylalanine. Positions 2–30 form a coiled coil; it reads AASSLEQKLSRLEAKLKQENREARRRIDL. The segment covering 18-30 has biased composition (basic and acidic residues); sequence KQENREARRRIDL. Residues 18-77 are disordered; it reads KQENREARRRIDLNLDISPQRPRPTLQLPLANDGGSRSPSSESSPQHPTPPSRPRHMLGL. Residues 36–63 show a composition bias toward low complexity; the sequence is PQRPRPTLQLPLANDGGSRSPSSESSPQ. The interval 37 to 57 is d Domain; sequence QRPRPTLQLPLANDGGSRSPS. One can recognise a Protein kinase domain in the interval 120–380; sequence LENLGEMGSG…YNKLLEHSFI (261 aa). ATP is bound by residues 126 to 134 and K149; that span reads MGSGTCGQV. Catalysis depends on D243, which acts as the Proton acceptor. The residue at position 271 (S271) is a Phosphoserine; by MAP3K. Position 275 is a phosphothreonine; by MAP3K (T275). A DVD domain region spans residues 377–400; it reads HSFIKHYETLEVDVASWFKDVMAK. Residue S411 is modified to Phosphoserine.

This sequence belongs to the protein kinase superfamily. STE Ser/Thr protein kinase family. MAP kinase kinase subfamily. Interacts with VRK2. Interacts (via its D domain) with its substrates MAPK8/JNK1, MAPK9/JNK2 and MAPK10/JNK3. Interacts (via its DVD domain) with MAP3Ks activators like MAP3K5/ASK1 and MAP3K1/MEKK1. Interacts with MAPK8IP1/JIP1, MAPK8IP2/JIP2 and MAPK8IP3/JIP3 scaffold proteins. Interacts with RASSF7, the interaction promotes phosphorylation. Found in a complex with SH3RF1, RAC1, MAP3K11/MLK3, MAPK8IP1/JIP1 and MAPK8/JNK1. Found in a complex with SH3RF1, RAC2, MAP3K7/TAK1, MAPK8IP1/JIP1, MAPK8/JNK1 and MAPK9/JNK2. It depends on Mg(2+) as a cofactor. In terms of processing, activated by phosphorylation on Ser-271 and Thr-275 by MAP kinase kinase kinases (MAP3Ks).

The protein localises to the nucleus. It localises to the cytoplasm. The catalysed reaction is L-seryl-[protein] + ATP = O-phospho-L-seryl-[protein] + ADP + H(+). It carries out the reaction L-threonyl-[protein] + ATP = O-phospho-L-threonyl-[protein] + ADP + H(+). The enzyme catalyses L-tyrosyl-[protein] + ATP = O-phospho-L-tyrosyl-[protein] + ADP + H(+). Its activity is regulated as follows. Activated by phosphorylation by specific MAP kinase kinase kinases such as MAP3K1/MEKK1, MAP3K3/MEKK3, MAP3K11/MLK3 and MAP3K12/DLK. Dual specificity protein kinase which acts as an essential component of the MAP kinase signal transduction pathway. Essential component of the stress-activated protein kinase/c-Jun N-terminal kinase (SAP/JNK) signaling pathway. With MAP2K4/MKK4, is the one of the only known kinase to directly activate the stress-activated protein kinase/c-Jun N-terminal kinases MAPK8/JNK1, MAPK9/JNK2 and MAPK10/JNK3. MAP2K4/MKK4 and MAP2K7/MKK7 both activate the JNKs by phosphorylation, but they differ in their preference for the phosphorylation site in the Thr-Pro-Tyr motif. MAP2K4/MKK4 shows preference for phosphorylation of the Tyr residue and MAP2K7/MKK7 for the Thr residue. The monophosphorylation of JNKs on the Thr residue is sufficient to increase JNK activity indicating that MAP2K7/MKK7 is important to trigger JNK activity, while the additional phosphorylation of the Tyr residue by MAP2K4/MKK4 ensures optimal JNK activation. Has a specific role in JNK signal transduction pathway activated by pro-inflammatory cytokines. The MKK/JNK signaling pathway is also involved in mitochondrial death signaling pathway, including the release cytochrome c, leading to apoptosis. Part of a non-canonical MAPK signaling pathway, composed of the upstream MAP3K12 kinase and downstream MAP kinases MAPK1/ERK2 and MAPK3/ERK1, that enhances the AP-1-mediated transcription of APP in response to APOE. The chain is Dual specificity mitogen-activated protein kinase kinase 7 from Rattus norvegicus (Rat).